The chain runs to 325 residues: MGGWSIALHGGAGDIPFSLPPERRQPREEGLRHCLQIGVEALKSQKPPLDVVELVVRELENIQHFNAGIGSVLTNSGTVEMEASIMDGKTMKCGAVSGLSTVLNPISLARLVMDKTPHIYLAFQGAQDFAKQQGVETVDSSHFITAENVERLKLAIEANRVQVDYSQYNYPQPAQDDAEKELPLANGDSQIGTVGCVAVDSHGNLASATSTGGLVNKMVGRIGDTPLIGAGTYANELCAVSATGKGEAIISATVARDVAALMEFKGLSLKEAADYVVHERTPKGTVGLIAVSAAGEIAMPFNTTGMFRASATEDGYSEIAIWPTT.

The active-site Nucleophile is the T193. Substrate contacts are provided by residues 221–224 (RIGD) and 243–246 (TGKG).

Belongs to the Ntn-hydrolase family. In terms of assembly, heterotetramer of two alpha and two beta chains arranged as a dimer of alpha/beta heterodimers. Cleaved into an alpha and beta chain by autocatalysis; this activates the enzyme. The N-terminal residue of the beta subunit is responsible for the nucleophile hydrolase activity. As to expression, developing seeds.

The catalysed reaction is Cleavage of a beta-linked Asp residue from the N-terminus of a polypeptide.. Its function is as follows. Acts in asparagine catabolism but also in the final steps of protein degradation via hydrolysis of a range of isoaspartyl dipeptides. The sequence is that of Isoaspartyl peptidase/L-asparaginase from Lupinus angustifolius (Narrow-leaved blue lupine).